Reading from the N-terminus, the 636-residue chain is Capsid vertex component 2 (636 aa).

Residues 1 to 48 form an interaction with major capsid protein/MCP region; the sequence is MSLLHTFWRLPVAVFFEPHEENVLRCPERVLRRLLEDAAVAMRGGGWR. The tract at residues 97–125 is disordered; the sequence is DEGPSPRTLLQPPCRPRSSSPGTGVAGAS.

It belongs to the herpesviridae CVC2 protein family. As to quaternary structure, heterodimerizes with CVC1. Interacts with major capsid protein/MCP and triplex capsid protein 1/TRX1 at the pentamer vertices. Interacts with the large tegument protein/LTP.

It is found in the virion. It localises to the host nucleus. Functionally, capsid vertex-specific component that plays a role during viral DNA encapsidation, assuring correct genome cleavage and presumably stabilizing capsids that contain full-length viral genomes. Participates in the interaction between the capsid and the tegument through interaction with the large tegument protein/LTP. This is Capsid vertex component 2 from Homo sapiens (Human).